Consider the following 602-residue polypeptide: CDPK-related protein kinase (602 aa).

The interval 1-59 (MGICVSKPSPEPDLHNHHTSIPVNDTSLPPQDNSIPPKDIAIPAQDNNKPPGKKSPFLP) is disordered. Over residues 19–34 (TSIPVNDTSLPPQDNS) the composition is skewed to polar residues. A run of 3 repeats spans residues 20-26 (SIPVNDT), 27-33 (SLPPQDN), and 34-40 (SIPPKDI). A 3 X 7 AA tandem repeats of S-[LI]-P-X-X-D-X region spans residues 20–40 (SIPVNDTSLPPQDNSIPPKDI). Residues 148 to 410 (FEVGEEVGRG…AAQALCHSWI (263 aa)) enclose the Protein kinase domain. ATP is bound by residues 154-162 (VGRGHFGYT) and Lys180. Asp276 functions as the Proton acceptor in the catalytic mechanism. 4 consecutive EF-hand domains span residues 451 to 486 (VDELFYLKEQFVLLEPTKNGTISLENIKQALMRNST), 487 to 527 (DAMK…LEAL), 528 to 563 (DRWEQHARCAYDLFEKDGNRAIMIEELASELGLGPS), and 564 to 602 (IPVHAVLHDWIRHTDGKLSFLGYVKLLHGVSTRAIAKAQ).

Belongs to the protein kinase superfamily. CAMK Ser/Thr protein kinase family. CaMK subfamily.

The catalysed reaction is L-seryl-[protein] + ATP = O-phospho-L-seryl-[protein] + ADP + H(+). It carries out the reaction L-threonyl-[protein] + ATP = O-phospho-L-threonyl-[protein] + ADP + H(+). The chain is CDPK-related protein kinase (CRK) from Daucus carota (Wild carrot).